Reading from the N-terminus, the 211-residue chain is Small ribosomal subunit protein uS3 (211 aa).

The KH type-2 domain occupies 38-106 (LRNFLKKRLF…EIYLNIQEVR (69 aa)).

Belongs to the universal ribosomal protein uS3 family. As to quaternary structure, part of the 30S ribosomal subunit. Forms a tight complex with proteins S10 and S14.

Its function is as follows. Binds the lower part of the 30S subunit head. Binds mRNA in the 70S ribosome, positioning it for translation. This Geobacter metallireducens (strain ATCC 53774 / DSM 7210 / GS-15) protein is Small ribosomal subunit protein uS3.